Reading from the N-terminus, the 291-residue chain is MVHKPVLLNEVVEALSPKDGSVYVDATFGGGGYSRRILETAQCVVYAIDQDVVVKKYFDELLQSFPGRLNLAISRFSKLREVVLSFGVDKVDGVVFDLGTSAMQLADASRGFSFMNSGSLDMRMCSSALRDAAMFVNTVPEKEMADVIYQYGGERYSRRVARAIIDARRKCRINNTGDLATIIRSAVPRSRVHPIDPATRTFQAIRIWVNNELEELQAGLEAAAEVLKIGGKILVTSFHSLEDRVVKHKFRSLCDMGFSLINKKAIMPTDEEVKNNPRSRSGKLRAIARVE.

S-adenosyl-L-methionine-binding positions include 31–33, Asp-49, Phe-76, Asp-97, and Gln-104; that span reads GGY.

The protein belongs to the methyltransferase superfamily. RsmH family.

It is found in the cytoplasm. The catalysed reaction is cytidine(1402) in 16S rRNA + S-adenosyl-L-methionine = N(4)-methylcytidine(1402) in 16S rRNA + S-adenosyl-L-homocysteine + H(+). Specifically methylates the N4 position of cytidine in position 1402 (C1402) of 16S rRNA. In Anaplasma marginale (strain Florida), this protein is Ribosomal RNA small subunit methyltransferase H.